The following is a 675-amino-acid chain: Neurexin-3b-beta (675 aa).

Residues methionine 1–glycine 30 form the signal peptide. Topologically, residues serine 31–threonine 599 are extracellular. The Laminin G-like domain occupies alanine 81 to valine 281. Disordered stretches follow at residues threonine 313 to serine 337 and phenylalanine 490 to arginine 534. The segment covering serine 325–isoleucine 335 has biased composition (polar residues). A helical membrane pass occupies residues glycine 600–methionine 620. At tyrosine 621–valine 675 the chain is on the cytoplasmic side. The disordered stretch occupies residues asparagine 642–valine 675. A compositionally biased stretch (basic and acidic residues) spans arginine 665–valine 675.

The protein belongs to the neurexin family. Post-translationally, processed by alpha-secretase leading to the formation of an extracellular soluble protein as well as a C-terminal membrane-embedded fragment (CTF). Proteolysis of these CTFs by gamma-secretase releases intracellular domains (ICDs) and extracellular peptides.

Its subcellular location is the membrane. Its function is as follows. Neuronal cell surface protein that may be involved in cell recognition and cell adhesion. The protein is Neurexin-3b-beta (nrxn3b) of Danio rerio (Zebrafish).